We begin with the raw amino-acid sequence, 800 residues long: Small ribosomal subunit protein uS3c (800 aa).

An S3-like 1st part region spans residues 1–118; sequence MGQKVHPSGF…LQVKKDILVK (118 aa). The segment at 119 to 664 is intervening sequence (IVS); the sequence is LQKTRQYLTN…FLDCKFEELE (546 aa). The tract at residues 665–800 is S3-like 2nd part; it reads RRKTMWVQNL…TKLVTESTGA (136 aa).

This sequence belongs to the universal ribosomal protein uS3 family. In terms of assembly, part of the 30S ribosomal subunit.

The protein resides in the plastid. Its subcellular location is the chloroplast. The chain is Small ribosomal subunit protein uS3c (rps3) from Chlamydomonas moewusii (Chlamydomonas eugametos).